A 916-amino-acid chain; its full sequence is DNA mismatch repair protein MutS (916 aa).

The tract at residues 1-47 (MSEALSVPAAEGENTVTASESPDLAATSARAEKVGKQEKPEKAEKQS) is disordered. Residues 30–45 (RAEKVGKQEKPEKAEK) show a composition bias toward basic and acidic residues. ATP is bound at residue 656–663 (GPNMGGKS). Over residues 843–861 (ADATPTPQMDLFSAQSSPS) the composition is skewed to polar residues. The interval 843–880 (ADATPTPQMDLFSAQSSPSADDEDDKSAGQSAVPPAQA) is disordered.

Belongs to the DNA mismatch repair MutS family.

Functionally, this protein is involved in the repair of mismatches in DNA. It is possible that it carries out the mismatch recognition step. This protein has a weak ATPase activity. In Cupriavidus metallidurans (strain ATCC 43123 / DSM 2839 / NBRC 102507 / CH34) (Ralstonia metallidurans), this protein is DNA mismatch repair protein MutS.